The following is a 242-amino-acid chain: Tropomyosin-1 (242 aa).

Disordered stretches follow at residues Met1–Ala31 and Thr65–Tyr96. Positions Met1–Met242 form a coiled coil. 2 stretches are compositionally biased toward basic and acidic residues: residues Thr13–Gln23 and Lys70–Tyr96.

Belongs to the tropomyosin family. As to quaternary structure, homodimer. In terms of tissue distribution, expressed ubiquitously.

The chain is Tropomyosin-1 (TPM1) from Podocoryna carnea (Hydrozoan).